The sequence spans 327 residues: DNA-directed RNA polymerase subunit alpha (327 aa).

Residues 1–231 (MIYQMQMPAK…DHVLLFADFS (231 aa)) form an alpha N-terminal domain (alpha-NTD) region. The alpha C-terminal domain (alpha-CTD) stretch occupies residues 247-327 (DEFETMRRLL…GMDITRYQMK (81 aa)).

This sequence belongs to the RNA polymerase alpha chain family. In terms of assembly, homodimer. The RNAP catalytic core consists of 2 alpha, 1 beta, 1 beta' and 1 omega subunit. When a sigma factor is associated with the core the holoenzyme is formed, which can initiate transcription.

The enzyme catalyses RNA(n) + a ribonucleoside 5'-triphosphate = RNA(n+1) + diphosphate. Its function is as follows. DNA-dependent RNA polymerase catalyzes the transcription of DNA into RNA using the four ribonucleoside triphosphates as substrates. This chain is DNA-directed RNA polymerase subunit alpha, found in Chlorobium chlorochromatii (strain CaD3).